The primary structure comprises 268 residues: Putative esterase/lipase 2 (268 aa).

Residue histidine 29 is part of the active site. The active-site Charge relay system is the serine 98.

The protein belongs to the lipase/esterase LIP3/BchO family.

This chain is Putative esterase/lipase 2, found in Mycoplasma genitalium (strain ATCC 33530 / DSM 19775 / NCTC 10195 / G37) (Mycoplasmoides genitalium).